The sequence spans 609 residues: MPEILNHTLILEKIKNLGASPGCYLWKSKKGEVLYVGKAKNLDKRVRSYLKENHPDVKTKVLQREIFDLDWIATGTEKEALILEATLIKKHNPRFNVRLKDDKKYPYICVSLSEPYPMVYVTRKLKDNGDRYFGPYSDVKSTRETLDIILRIFPVRKTRQVLPLPRPRRPCLNFDMGRCLGPCQGNIPVEDYKVIIDQVIQFLEGRKESLVSDLNIKMSNASERLDFEKAARYRDMLQRIQNFREKQTVVSLEGGDEDVIGFARKQDEGQVILLEIRGGRLETKKSFPIQGVLDAENSEILGAFFRDYYLNASLVPPCIFIPADIQDEVIPVIDVLQEKTGFRPKIKFPKGGDKRSLLKIAEKNAELGLSERLLATHYRDQTASLKEIQEMFSLERLPHIIECYDISHFQGSQPVASGVMFVEGKPFKQGYRKYNIQGYEGINDPGMIHEVISRRLQRIINEEGVFPDLIVIDGGLTQLTKACEAAVEAGAEGIPMVGLAKKREEIFFPGENEPFIFDMNSPGMKLLRHLRDEAHRFGVSHHRSRRNKETMRSLIQEVPDIGFKRSKLLLQHFSGEKKIEEATKEELLLVPGIGENLAEKILKQLQKKE.

The GIY-YIG domain occupies 19–97; it reads ASPGCYLWKS…IKKHNPRFNV (79 aa). The UVR domain maps to 208 to 243; that stretch reads ESLVSDLNIKMSNASERLDFEKAARYRDMLQRIQNF.

It belongs to the UvrC family. Interacts with UvrB in an incision complex.

It is found in the cytoplasm. Its function is as follows. The UvrABC repair system catalyzes the recognition and processing of DNA lesions. UvrC both incises the 5' and 3' sides of the lesion. The N-terminal half is responsible for the 3' incision and the C-terminal half is responsible for the 5' incision. This is UvrABC system protein C from Leptospira interrogans serogroup Icterohaemorrhagiae serovar Lai (strain 56601).